The chain runs to 461 residues: Fumarate hydratase class II (461 aa).

Residues Ser97–Thr99, His127–Asp130, Ser137–Asn139, and Thr185 each bind substrate. His186 functions as the Proton donor/acceptor in the catalytic mechanism. Ser316 is a catalytic residue. Residues Ser317 and Lys322–Asn324 each bind substrate.

The protein belongs to the class-II fumarase/aspartase family. Fumarase subfamily. Homotetramer.

The protein localises to the cytoplasm. It catalyses the reaction (S)-malate = fumarate + H2O. It participates in carbohydrate metabolism; tricarboxylic acid cycle; (S)-malate from fumarate: step 1/1. Functionally, involved in the TCA cycle. Catalyzes the stereospecific interconversion of fumarate to L-malate. The chain is Fumarate hydratase class II from Staphylococcus epidermidis (strain ATCC 35984 / DSM 28319 / BCRC 17069 / CCUG 31568 / BM 3577 / RP62A).